The following is a 470-amino-acid chain: MLRGISQLPAVATMSWVLLPVLWLIVQTQAIAIKQTPELTLHEIVCPKKLHILHKREIKNNQTEKHGKEERYEPEVQYQMILNGEEIILSLQKTKHLLGPDYTETLYSPRGEEITTKPENMEHCYYKGNILNEKNSVASISTCDGLRGYFTHHHQRYQIKPLKSTDEKEHAVFTSNQEEQDPANHTCGVKSTDGKQGPIRISRSLKSPEKEDFLRAQKYIDLYLVLDNAFYKNYNENLTLIRSFVFDVMNLLNVIYNTIDVQVALVGMEIWSDGDKIKVVPSASTTFDNFLRWHSSNLGKKIHDHAQLLSGISFNNRRVGLAASNSLCSPSSVAVIEAKKKNNVALVGVMSHELGHVLGMPDVPFNTKCPSGSCVMNQYLSSKFPKDFSTSCRAHFERYLLSQKPKCLLQAPIPTNIMTTPVCGNHLLEVGEDCDCGSPKECTNLCCEALTCKLKPGTDCGGDAPNHTTE.

The signal sequence occupies residues 1-30; it reads MLRGISQLPAVATMSWVLLPVLWLIVQTQA. The propeptide occupies 31–205; that stretch reads IAIKQTPELT…QGPIRISRSL (175 aa). Residue N61 is glycosylated (N-linked (GlcNAc...) asparagine). Residues 173–200 are disordered; the sequence is FTSNQEEQDPANHTCGVKSTDGKQGPIR. N184 carries N-linked (GlcNAc...) (complex) asparagine glycosylation. The Peptidase M12B domain occupies 218–412; sequence KYIDLYLVLD…QKPKCLLQAP (195 aa). The N-linked (GlcNAc...) asparagine glycan is linked to N237. Disulfide bonds link C328/C407 and C369/C374. Residue H352 participates in Zn(2+) binding. E353 is a catalytic residue. The Zn(2+) site is built by H356 and D362. Residues 420–470 form the Disintegrin domain; the sequence is TPVCGNHLLEVGEDCDCGSPKECTNLCCEALTCKLKPGTDCGGDAPNHTTE. Residue N466 is glycosylated (N-linked (GlcNAc...) asparagine).

It depends on Zn(2+) as a cofactor. Expressed highly in the small intestine and appendix, moderately in lymph node, mucosal lining of the colon, thymus, spleen and very weakly in the bone marrow. Predominantly expressed in dendritic cells (DC) of the germinal center. Weakly expressed in monocyte and highly expressed in macrophage. Absent in immature DC.

It is found in the secreted. May play an important role in the control of the immune response and during pregnancy. The chain is ADAM DEC1 (ADAMDEC1) from Homo sapiens (Human).